Here is a 308-residue protein sequence, read N- to C-terminus: Ribonuclease HIII (308 aa).

The 216-residue stretch at 93-308 (MSVLGSDETG…ANTEKARKMI (216 aa)) folds into the RNase H type-2 domain. D99, E100, and D204 together coordinate a divalent metal cation.

It belongs to the RNase HII family. RnhC subfamily. It depends on Mn(2+) as a cofactor. Mg(2+) serves as cofactor.

Its subcellular location is the cytoplasm. The catalysed reaction is Endonucleolytic cleavage to 5'-phosphomonoester.. In terms of biological role, endonuclease that specifically degrades the RNA of RNA-DNA hybrids. The chain is Ribonuclease HIII from Lysinibacillus sphaericus (strain C3-41).